The chain runs to 302 residues: MAGRELSHLQQLEAESIQIIREVAAEFDNPVMLYSIGKDSSVMLHLARKAFYPGKIPFPLLHVDTGWKFKEMIAFRDAQAKKFGFELLTHINPEGLAQGINPFDHGSAKHTDIMKTQGLKQALNQYGFDAAFGGARRDEEKSRAKERVYSFRDRHHRWDPKNQRPELWRTYNGAVNKGESIRVFPLSNWTELDIWQYIYQENIELVPLYFAAKRQVVERGGQLIMADDERMKLAEGEQFKEELVRFRTLGCYPLTAAMHSEADSLEKIIEEMLLTRSSERQGRLIDSDQSASMEQKKRQGYF.

The tract at residues 280–302 (RQGRLIDSDQSASMEQKKRQGYF) is disordered.

It belongs to the PAPS reductase family. CysD subfamily. As to quaternary structure, heterodimer composed of CysD, the smaller subunit, and CysN.

The enzyme catalyses sulfate + ATP + H(+) = adenosine 5'-phosphosulfate + diphosphate. The protein operates within sulfur metabolism; hydrogen sulfide biosynthesis; sulfite from sulfate: step 1/3. With CysN forms the ATP sulfurylase (ATPS) that catalyzes the adenylation of sulfate producing adenosine 5'-phosphosulfate (APS) and diphosphate, the first enzymatic step in sulfur assimilation pathway. APS synthesis involves the formation of a high-energy phosphoric-sulfuric acid anhydride bond driven by GTP hydrolysis by CysN coupled to ATP hydrolysis by CysD. This is Sulfate adenylyltransferase subunit 2 from Shewanella baltica (strain OS223).